Reading from the N-terminus, the 371-residue chain is tRNA-specific 2-thiouridylase MnmA (371 aa).

ATP-binding positions include glycine 7 to serine 14 and methionine 33. Residues asparagine 103–aspartate 105 are interaction with target base in tRNA. Cysteine 108 functions as the Nucleophile in the catalytic mechanism. An intrachain disulfide couples cysteine 108 to cysteine 201. Position 133 (glycine 133) interacts with ATP. The tract at residues lysine 151–glutamine 153 is interaction with tRNA. Cysteine 201 functions as the Cysteine persulfide intermediate in the catalytic mechanism. An interaction with tRNA region spans residues arginine 308 to tyrosine 309.

It belongs to the MnmA/TRMU family.

Its subcellular location is the cytoplasm. The enzyme catalyses S-sulfanyl-L-cysteinyl-[protein] + uridine(34) in tRNA + AH2 + ATP = 2-thiouridine(34) in tRNA + L-cysteinyl-[protein] + A + AMP + diphosphate + H(+). Catalyzes the 2-thiolation of uridine at the wobble position (U34) of tRNA, leading to the formation of s(2)U34. The polypeptide is tRNA-specific 2-thiouridylase MnmA (Mycoplasmopsis pulmonis (strain UAB CTIP) (Mycoplasma pulmonis)).